Consider the following 98-residue polypeptide: Small ribosomal subunit protein bS6 (98 aa).

It belongs to the bacterial ribosomal protein bS6 family.

Functionally, binds together with bS18 to 16S ribosomal RNA. The polypeptide is Small ribosomal subunit protein bS6 (Lactobacillus johnsonii (strain CNCM I-12250 / La1 / NCC 533)).